The chain runs to 319 residues: Zinc finger protein C19B12.07c (319 aa).

The C2H2-type zinc-finger motif lies at 146 to 170 (FRCLCCHVPCKNKKLLREHMNNKRH).

This sequence belongs to the ZNF277 family.

It is found in the nucleus. The sequence is that of Zinc finger protein C19B12.07c from Schizosaccharomyces pombe (strain 972 / ATCC 24843) (Fission yeast).